Here is a 146-residue protein sequence, read N- to C-terminus: Hemoglobin subunit beta (146 aa).

N-acetylvaline is present on Val-1. Residues Asn-2 to His-146 enclose the Globin domain. Thr-12 carries the post-translational modification Phosphothreonine. Lys-59 carries the post-translational modification N6-acetyllysine. His-63 lines the heme b pocket. An N6-acetyllysine modification is found at Lys-82. His-92 serves as a coordination point for heme b. An S-nitrosocysteine modification is found at Cys-93. Lys-144 carries the N6-acetyllysine modification.

It belongs to the globin family. Heterotetramer of two alpha chains and two beta chains. In terms of tissue distribution, red blood cells.

In terms of biological role, involved in oxygen transport from the lung to the various peripheral tissues. The protein is Hemoglobin subunit beta (HBB) of Loxodonta africana (African elephant).